Consider the following 227-residue polypeptide: Phosphoribosylformylglycinamidine synthase subunit PurQ (227 aa).

A Glutamine amidotransferase type-1 domain is found at 2–227; sequence RWAIVRFPGA…FLGLVREVAR (226 aa). Catalysis depends on C85, which acts as the Nucleophile. Catalysis depends on residues H200 and E202.

Part of the FGAM synthase complex composed of 1 PurL, 1 PurQ and 2 PurS subunits.

It localises to the cytoplasm. The catalysed reaction is N(2)-formyl-N(1)-(5-phospho-beta-D-ribosyl)glycinamide + L-glutamine + ATP + H2O = 2-formamido-N(1)-(5-O-phospho-beta-D-ribosyl)acetamidine + L-glutamate + ADP + phosphate + H(+). The enzyme catalyses L-glutamine + H2O = L-glutamate + NH4(+). It participates in purine metabolism; IMP biosynthesis via de novo pathway; 5-amino-1-(5-phospho-D-ribosyl)imidazole from N(2)-formyl-N(1)-(5-phospho-D-ribosyl)glycinamide: step 1/2. Part of the phosphoribosylformylglycinamidine synthase complex involved in the purines biosynthetic pathway. Catalyzes the ATP-dependent conversion of formylglycinamide ribonucleotide (FGAR) and glutamine to yield formylglycinamidine ribonucleotide (FGAM) and glutamate. The FGAM synthase complex is composed of three subunits. PurQ produces an ammonia molecule by converting glutamine to glutamate. PurL transfers the ammonia molecule to FGAR to form FGAM in an ATP-dependent manner. PurS interacts with PurQ and PurL and is thought to assist in the transfer of the ammonia molecule from PurQ to PurL. In Thermus thermophilus (strain ATCC BAA-163 / DSM 7039 / HB27), this protein is Phosphoribosylformylglycinamidine synthase subunit PurQ.